A 475-amino-acid polypeptide reads, in one-letter code: Ankyrin repeat, SAM and basic leucine zipper domain-containing protein 1 (475 aa).

A disordered region spans residues 1–24; it reads MAAAVQRGLPVAGGGESSESEDDG. Residues Ser-17, Ser-18, and Ser-20 each carry the phosphoserine modification. ANK repeat units lie at residues 45 to 74, 78 to 107, 110 to 144, 148 to 177, 181 to 210, and 214 to 243; these read EKNEIFKKALTTGDISLVEELLDSGISVES, YGWTPLMYAASVANVELVRVLLDRGANASF, DKHTVLITACSARGSQEQILKCVELLLSRNADPNV, RLMTPIMYAARDGHPQVVALLVAQGAEVNA, NGYTALTWAARQGHKNVVLKLLELGANKML, and DGKTPSEVANKNKHPEIFSLLSLTLNPLEG. The SAM domain maps to 272-334; it reads SYAAFGDLEI…KILAALKELA (63 aa).

Interacts with DDX4, PIWIL1, RANBP9 and TDRD1.

The protein resides in the cytoplasm. Plays a central role during spermatogenesis by repressing transposable elements and preventing their mobilization, which is essential for the germline integrity. Acts via the piRNA metabolic process, which mediates the repression of transposable elements during meiosis by forming complexes composed of piRNAs and Piwi proteins and governs the methylation and subsequent repression of transposons. Its association with pi-bodies suggests a participation in the primary piRNAs metabolic process. Required prior to the pachytene stage to facilitate the production of multiple types of piRNAs, including those associated with repeats involved in the regulation of retrotransposons. May act by mediating protein-protein interactions during germ cell maturation. The sequence is that of Ankyrin repeat, SAM and basic leucine zipper domain-containing protein 1 (ASZ1) from Loxodonta africana (African elephant).